The chain runs to 729 residues: Phosphoribosylformylglycinamidine synthase subunit PurL (729 aa).

His54 is an active-site residue. 2 residues coordinate ATP: Tyr57 and Lys96. Glu98 is a binding site for Mg(2+). Residues 99 to 102 (SHNH) and Arg121 each bind substrate. The Proton acceptor role is filled by His100. A Mg(2+)-binding site is contributed by Asp122. Gln245 contacts substrate. Asp273 contacts Mg(2+). Position 317 to 319 (317 to 319 (ETQ)) interacts with substrate. Residues Asp495 and Gly532 each coordinate ATP. Mg(2+) is bound at residue Asn533. Residue Ser535 participates in substrate binding.

The protein belongs to the FGAMS family. Monomer. Part of the FGAM synthase complex composed of 1 PurL, 1 PurQ and 2 PurS subunits.

Its subcellular location is the cytoplasm. The catalysed reaction is N(2)-formyl-N(1)-(5-phospho-beta-D-ribosyl)glycinamide + L-glutamine + ATP + H2O = 2-formamido-N(1)-(5-O-phospho-beta-D-ribosyl)acetamidine + L-glutamate + ADP + phosphate + H(+). Its pathway is purine metabolism; IMP biosynthesis via de novo pathway; 5-amino-1-(5-phospho-D-ribosyl)imidazole from N(2)-formyl-N(1)-(5-phospho-D-ribosyl)glycinamide: step 1/2. Its function is as follows. Part of the phosphoribosylformylglycinamidine synthase complex involved in the purines biosynthetic pathway. Catalyzes the ATP-dependent conversion of formylglycinamide ribonucleotide (FGAR) and glutamine to yield formylglycinamidine ribonucleotide (FGAM) and glutamate. The FGAM synthase complex is composed of three subunits. PurQ produces an ammonia molecule by converting glutamine to glutamate. PurL transfers the ammonia molecule to FGAR to form FGAM in an ATP-dependent manner. PurS interacts with PurQ and PurL and is thought to assist in the transfer of the ammonia molecule from PurQ to PurL. The polypeptide is Phosphoribosylformylglycinamidine synthase subunit PurL (Staphylococcus epidermidis (strain ATCC 12228 / FDA PCI 1200)).